The following is a 330-amino-acid chain: MESNWTVHVFSRTLCHMLLWTAVLNLAAGTHDLPKAVVKLEPPWIQVLKEDTVTLTCEGTHNPGNSSTQWFHNGRSIRSQVQASYTFKATVNDSGEYRCQMEQTRLSDPVDLGVISDWLLLQTPQLVFLEGETITLRCHSWRNKLLNRISFFHNEKSVRYHHYSSNFSIPKANHSHSGDYYCKGSLGRTLHQSKPVTITVQGPKSSRSLPVLTIVAAVTGIAVAAIVIILVSLVYLKKKQVPALPGNPDHREMGETLPEEVGEYRQPSGGSVPVSPGPPSGLEPTSSSPYNPPDLEEAAKTEAENTITYSLLKHPEALDEETEHDYQNHI.

Positions 1 to 29 are cleaved as a signal peptide; the sequence is MESNWTVHVFSRTLCHMLLWTAVLNLAAG. Topologically, residues 30–210 are extracellular; that stretch reads THDLPKAVVK…QGPKSSRSLP (181 aa). Ig-like C2-type domains are found at residues 50-106 and 131-189; these read EDTV…QTRL and GETI…LGRT. 2 cysteine pairs are disulfide-bonded: Cys57–Cys99 and Cys138–Cys182. N-linked (GlcNAc...) asparagine glycans are attached at residues Asn65, Asn92, Asn166, and Asn173. A helical transmembrane segment spans residues 211 to 231; that stretch reads VLTIVAAVTGIAVAAIVIILV. Topologically, residues 232–330 are cytoplasmic; the sequence is SLVYLKKKQV…ETEHDYQNHI (99 aa). The tract at residues 261-330 is disordered; sequence VGEYRQPSGG…ETEHDYQNHI (70 aa). Residue Tyr290 is modified to Phosphotyrosine. An ITIM motif motif is present at residues 307-312; it reads ITYSLL. Position 309 is a phosphotyrosine; by SRC-type Tyr-kinases (Tyr309). Tyr326 is subject to Phosphotyrosine.

Interacts with FGR. Interacts with LYN. In terms of processing, glycosylated. When coaggregated to BCR, isoform IIB1 and isoform IIB1' become tyrosine phosphorylated and bind to the SH2 domains of the protein tyrosine phosphatase PTPC1. Phosphorylated by SRC-type Tyr-kinases such as LYN, BLK, FYN and SYK. Widely expressed by cells of hemopoietic origin. The isoforms are differentially expressed. Isoform IIB1 is preferentially expressed by cells of the lymphoid lineage, isoform IIB2 by cells of the myeloid lineage, and isoform IIB3 is released by macrophages and is present in the serum. Isoform IIB1' is expressed in myeloid and lymphoid cell lines, in normal spleen cells, and in resting or LPS-activated B-cells but is not detected in mesenteric lymph node cells.

The protein localises to the cell membrane. Its subcellular location is the cytoplasm. It is found in the cytoskeleton. It localises to the secreted. In terms of biological role, receptor for the Fc region of complexed immunoglobulins gamma. Low affinity receptor. Involved in a variety of effector and regulatory functions such as phagocytosis of antigen-antibody complexes from the circulation and modulation of antibody production by B-cells. Isoform IIB1 and isoform IIB1' form caps but fail to mediate endocytosis or phagocytosis. Isoform IIB2 can mediate the endocytosis of soluble immune complexes via clathrin-coated pits. Isoform IIB1 and isoform IIB2 can down-regulate B-cell, T-cell, and mast cell activation when coaggregated to B-cell receptors for AG (BCR), T-cell receptors for AG (TCR), and Fc receptors, respectively. In Mus musculus (Mouse), this protein is Low affinity immunoglobulin gamma Fc region receptor II (Fcgr2).